Here is a 311-residue protein sequence, read N- to C-terminus: tRNA-cytidine(32) 2-sulfurtransferase (311 aa).

The short motif at Ser-47–Ser-52 is the PP-loop motif element. The [4Fe-4S] cluster site is built by Cys-122, Cys-125, and Cys-213.

The protein belongs to the TtcA family. Homodimer. Requires Mg(2+) as cofactor. [4Fe-4S] cluster serves as cofactor.

The protein resides in the cytoplasm. It catalyses the reaction cytidine(32) in tRNA + S-sulfanyl-L-cysteinyl-[cysteine desulfurase] + AH2 + ATP = 2-thiocytidine(32) in tRNA + L-cysteinyl-[cysteine desulfurase] + A + AMP + diphosphate + H(+). It participates in tRNA modification. Catalyzes the ATP-dependent 2-thiolation of cytidine in position 32 of tRNA, to form 2-thiocytidine (s(2)C32). The sulfur atoms are provided by the cysteine/cysteine desulfurase (IscS) system. The sequence is that of tRNA-cytidine(32) 2-sulfurtransferase from Shigella dysenteriae serotype 1 (strain Sd197).